Consider the following 91-residue polypeptide: Small ribosomal subunit protein uS19 (91 aa).

This sequence belongs to the universal ribosomal protein uS19 family.

Functionally, protein S19 forms a complex with S13 that binds strongly to the 16S ribosomal RNA. The chain is Small ribosomal subunit protein uS19 from Metamycoplasma hominis (strain ATCC 23114 / DSM 25592 / NBRC 14850 / NCTC 10111 / PG21) (Mycoplasma hominis).